Reading from the N-terminus, the 261-residue chain is Small ribosomal subunit protein eS1 (261 aa).

Residues 1-18 are compositionally biased toward basic residues; the sequence is MAVGKNKRISKGKKGGKK. The tract at residues 1 to 20 is disordered; it reads MAVGKNKRISKGKKGGKKKA.

It belongs to the eukaryotic ribosomal protein eS1 family. As to quaternary structure, component of the small ribosomal subunit. Mature ribosomes consist of a small (40S) and a large (60S) subunit. The 40S subunit contains about 33 different proteins and 1 molecule of RNA (18S). The 60S subunit contains about 49 different proteins and 3 molecules of RNA (25S, 5.8S and 5S).

It is found in the cytoplasm. This chain is Small ribosomal subunit protein eS1, found in Catharanthus roseus (Madagascar periwinkle).